The sequence spans 439 residues: 3-phosphoshikimate 1-carboxyvinyltransferase (439 aa).

Residues Lys31, Ser32, and Arg36 each coordinate 3-phosphoshikimate. A phosphoenolpyruvate-binding site is contributed by Lys31. Positions 103 and 131 each coordinate phosphoenolpyruvate. Residues Ser175, Gln177, Asp322, and Lys349 each coordinate 3-phosphoshikimate. Gln177 lines the phosphoenolpyruvate pocket. Asp322 (proton acceptor) is an active-site residue. Arg353 and Arg397 together coordinate phosphoenolpyruvate.

This sequence belongs to the EPSP synthase family. In terms of assembly, monomer.

It is found in the cytoplasm. It carries out the reaction 3-phosphoshikimate + phosphoenolpyruvate = 5-O-(1-carboxyvinyl)-3-phosphoshikimate + phosphate. Its pathway is metabolic intermediate biosynthesis; chorismate biosynthesis; chorismate from D-erythrose 4-phosphate and phosphoenolpyruvate: step 6/7. Functionally, catalyzes the transfer of the enolpyruvyl moiety of phosphoenolpyruvate (PEP) to the 5-hydroxyl of shikimate-3-phosphate (S3P) to produce enolpyruvyl shikimate-3-phosphate and inorganic phosphate. The sequence is that of 3-phosphoshikimate 1-carboxyvinyltransferase from Clostridium tetani (strain Massachusetts / E88).